Here is a 146-residue protein sequence, read N- to C-terminus: UPF0178 protein BCQ_2874 (146 aa).

It belongs to the UPF0178 family.

This is UPF0178 protein BCQ_2874 from Bacillus cereus (strain Q1).